We begin with the raw amino-acid sequence, 291 residues long: Protein SpdB (291 aa).

Transmembrane regions (helical) follow at residues V24–G44, I71–L91, and W99–W119.

The protein localises to the cell membrane. Involved in plasmid transfer. The protein is Protein SpdB (spdB) of Streptomyces lividans.